A 119-amino-acid chain; its full sequence is Small ribosomal subunit protein uS13 (119 aa).

The disordered stretch occupies residues 92–119 (RRGLPVRGQRTKTNARTRKGPRKAIRAR).

It belongs to the universal ribosomal protein uS13 family. Part of the 30S ribosomal subunit. Forms a loose heterodimer with protein S19. Forms two bridges to the 50S subunit in the 70S ribosome.

In terms of biological role, located at the top of the head of the 30S subunit, it contacts several helices of the 16S rRNA. In the 70S ribosome it contacts the 23S rRNA (bridge B1a) and protein L5 of the 50S subunit (bridge B1b), connecting the 2 subunits; these bridges are implicated in subunit movement. Contacts the tRNAs in the A and P-sites. This Nitrosomonas eutropha (strain DSM 101675 / C91 / Nm57) protein is Small ribosomal subunit protein uS13.